The chain runs to 219 residues: MRLILLGPPGAGKGTQAAHICEAFGIPQISTGDMLRAAVKAGTPLGQQAKKIMDEGGLVSDDIILGLIEERVAQADCANGFLFDGFPRTIAQADGLNDQGIRIDAVVEIQVPDEEIVDRMAGRRVHPGSGRVYHVTHNPPRQEGKDDVTGEDLVQREDDREETVRHRLGVYHEQTRPLVDYYSQWAQKGGADAPAYITVDGQRPVETVRDEILAALKAR.

10-15 (GAGKGT) contacts ATP. The segment at 30 to 59 (STGDMLRAAVKAGTPLGQQAKKIMDEGGLV) is NMP. Residues T31, R36, 57–59 (GLV), 85–88 (GFPR), and Q92 contribute to the AMP site. The segment at 122–159 (GRRVHPGSGRVYHVTHNPPRQEGKDDVTGEDLVQREDD) is LID. Residues R123 and 132–133 (VY) each bind ATP. The tract at residues 128–150 (GSGRVYHVTHNPPRQEGKDDVTG) is disordered. Positions 140–150 (PRQEGKDDVTG) are enriched in basic and acidic residues. The AMP site is built by R156 and R167. An ATP-binding site is contributed by R203.

The protein belongs to the adenylate kinase family. Monomer.

It localises to the cytoplasm. It catalyses the reaction AMP + ATP = 2 ADP. It functions in the pathway purine metabolism; AMP biosynthesis via salvage pathway; AMP from ADP: step 1/1. In terms of biological role, catalyzes the reversible transfer of the terminal phosphate group between ATP and AMP. Plays an important role in cellular energy homeostasis and in adenine nucleotide metabolism. The chain is Adenylate kinase from Halorhodospira halophila (strain DSM 244 / SL1) (Ectothiorhodospira halophila (strain DSM 244 / SL1)).